Reading from the N-terminus, the 328-residue chain is Ribosomal RNA large subunit methyltransferase F (328 aa).

Positions 1-31 (MTDTRKPPRKKPQRPAKPAAPREKATLHPRN) are disordered.

Belongs to the methyltransferase superfamily. METTL16/RlmF family.

It is found in the cytoplasm. It carries out the reaction adenosine(1618) in 23S rRNA + S-adenosyl-L-methionine = N(6)-methyladenosine(1618) in 23S rRNA + S-adenosyl-L-homocysteine + H(+). Functionally, specifically methylates the adenine in position 1618 of 23S rRNA. The sequence is that of Ribosomal RNA large subunit methyltransferase F from Pseudomonas savastanoi pv. phaseolicola (strain 1448A / Race 6) (Pseudomonas syringae pv. phaseolicola (strain 1448A / Race 6)).